The following is a 235-amino-acid chain: Protein GrpE (235 aa).

Composition is skewed to basic and acidic residues over residues 1–16 and 24–35; these read MENK…HEKN and NNVKKENLHEDQ. Positions 1–51 are disordered; that stretch reads MENKNQKHNNEFHEKNQQSQKDNNNVKKENLHEDQSDLNDANFDDGGKKNK.

It belongs to the GrpE family. Homodimer.

The protein localises to the cytoplasm. Its function is as follows. Participates actively in the response to hyperosmotic and heat shock by preventing the aggregation of stress-denatured proteins, in association with DnaK and GrpE. It is the nucleotide exchange factor for DnaK and may function as a thermosensor. Unfolded proteins bind initially to DnaJ; upon interaction with the DnaJ-bound protein, DnaK hydrolyzes its bound ATP, resulting in the formation of a stable complex. GrpE releases ADP from DnaK; ATP binding to DnaK triggers the release of the substrate protein, thus completing the reaction cycle. Several rounds of ATP-dependent interactions between DnaJ, DnaK and GrpE are required for fully efficient folding. This Malacoplasma penetrans (strain HF-2) (Mycoplasma penetrans) protein is Protein GrpE.